Consider the following 219-residue polypeptide: KP6 killer toxin (219 aa).

The signal sequence occupies residues 1-19 (MLIFSVLMYLGLLLAGASA). A propeptide spanning residues 20–27 (LPNGLSPR) is cleaved from the precursor. 4 disulfides stabilise this stretch: Cys32–Cys39, Cys43–Cys101, Cys45–Cys92, and Cys62–Cys78. N-linked (GlcNAc...) asparagine; by host glycosylation occurs at Asn98. Positions 106–138 (KRTIQDSATDTVDLGAELHRDDPPPTASDIGKR) are excised as a propeptide. A disordered region spans residues 120 to 142 (GAELHRDDPPPTASDIGKRGKRP).

As to quaternary structure, heterodimer of two small polypeptides that are not covalently linked.

It localises to the secreted. In terms of biological role, this protein is lethal to sensitive cells of the same or related species. The KP6 alpha subunit is known to recognize some cellular receptors before interaction of the complex with KP6 beta, precipitating cell death. This Ustilago maydis P6 virus (UmV6) protein is KP6 killer toxin.